We begin with the raw amino-acid sequence, 86 residues long: MANTPQARKRIRRNERRAEINGNRLSRIRTFVKKVETALAGGDKTAAAEALKAAQPELARGVARGVLHKNTVARKMSRLTKRVASL.

The protein belongs to the bacterial ribosomal protein bS20 family.

In terms of biological role, binds directly to 16S ribosomal RNA. In Novosphingobium aromaticivorans (strain ATCC 700278 / DSM 12444 / CCUG 56034 / CIP 105152 / NBRC 16084 / F199), this protein is Small ribosomal subunit protein bS20.